The following is a 534-amino-acid chain: Dual specificity calcium/calmodulin-dependent 3',5'-cyclic nucleotide phosphodiesterase 1B (534 aa).

Residues 1–21 (MELSPRSPPEMLESDCPSPLE) form a disordered region. Residues Ser-7 and Ser-14 each carry the phosphoserine modification. 2 calmodulin-binding regions span residues 27-47 (SKKM…QLEN) and 116-139 (EKPK…MFRR). One can recognise a PDEase domain in the interval 144–501 (VGPTYSTAVL…QKWKERAASG (358 aa)). The active-site Proton donor is the His-221. Zn(2+) is bound by residues His-225, His-261, Asp-262, and Asp-368. Asp-262 lines the Mg(2+) pocket. Disordered regions lie at residues 442-473 (VQPT…GDPN) and 494-534 (WKER…GNLD). A compositionally biased stretch (polar residues) spans 453 to 462 (KNQPSFQWRQ). Residues Ser-464 and Ser-512 each carry the phosphoserine modification.

The protein belongs to the cyclic nucleotide phosphodiesterase family. PDE1 subfamily. As to quaternary structure, homodimer. Requires Zn(2+) as cofactor. Mg(2+) is required as a cofactor. As to expression, expressed in central nervous system regions. Most abundant in basal ganglia. Also found in kidney papilla and adrenal medulla.

The protein localises to the cytoplasm. The protein resides in the cytosol. It catalyses the reaction a nucleoside 3',5'-cyclic phosphate + H2O = a nucleoside 5'-phosphate + H(+). The catalysed reaction is 3',5'-cyclic GMP + H2O = GMP + H(+). The enzyme catalyses 3',5'-cyclic AMP + H2O = AMP + H(+). Type I PDE are activated by the binding of calmodulin in the presence of Ca(2+). Functionally, cyclic nucleotide phosphodiesterase with a dual specificity for the second messengers cAMP and cGMP, which are key regulators of many important physiological processes. Has a preference for cGMP as a substrate. This Bos taurus (Bovine) protein is Dual specificity calcium/calmodulin-dependent 3',5'-cyclic nucleotide phosphodiesterase 1B.